The chain runs to 155 residues: Small ribosomal subunit protein uS7 (155 aa).

This sequence belongs to the universal ribosomal protein uS7 family. As to quaternary structure, part of the 30S ribosomal subunit. Contacts proteins S9 and S11.

In terms of biological role, one of the primary rRNA binding proteins, it binds directly to 16S rRNA where it nucleates assembly of the head domain of the 30S subunit. Is located at the subunit interface close to the decoding center, probably blocks exit of the E-site tRNA. The polypeptide is Small ribosomal subunit protein uS7 (Cytophaga hutchinsonii (strain ATCC 33406 / DSM 1761 / CIP 103989 / NBRC 15051 / NCIMB 9469 / D465)).